A 220-amino-acid polypeptide reads, in one-letter code: 3-dehydroquinate dehydratase (220 aa).

3-dehydroquinate contacts are provided by residues 29–31 (EFR) and arginine 56. Histidine 116 (proton donor/acceptor) is an active-site residue. Residue lysine 142 is the Schiff-base intermediate with substrate of the active site. The 3-dehydroquinate site is built by arginine 180, serine 200, and glutamine 204.

The protein belongs to the type-I 3-dehydroquinase family. In terms of assembly, homodimer.

The catalysed reaction is 3-dehydroquinate = 3-dehydroshikimate + H2O. Its pathway is metabolic intermediate biosynthesis; chorismate biosynthesis; chorismate from D-erythrose 4-phosphate and phosphoenolpyruvate: step 3/7. In terms of biological role, involved in the third step of the chorismate pathway, which leads to the biosynthesis of aromatic amino acids. Catalyzes the cis-dehydration of 3-dehydroquinate (DHQ) and introduces the first double bond of the aromatic ring to yield 3-dehydroshikimate. The sequence is that of 3-dehydroquinate dehydratase from Methanocaldococcus jannaschii (strain ATCC 43067 / DSM 2661 / JAL-1 / JCM 10045 / NBRC 100440) (Methanococcus jannaschii).